Here is a 639-residue protein sequence, read N- to C-terminus: Tubulin--tyrosine ligase-like protein 12 (639 aa).

The TTL domain occupies 295–639; that stretch reads PQGHVFRVHC…TDNCHVTRII (345 aa). ATP is bound by residues 445–448, Lys-463, and Asp-465; that span reads SKYI.

It belongs to the tubulin--tyrosine ligase family. As to quaternary structure, interacts with MAVS; the interaction prevents MAVS binding to TBK1 and IKBKE. Interacts (via N-terminus) with TBK1 (via protein kinase domain). Interacts (via TTL domain) with IKBKE (via protein kinase domain). Interacts with tubulin alpha. Interacts with histone H3 and histone H4 (when trimethylated at 'Lys-20' (H4K20me3)). Interacts with CBX3. Widely expressed with highest levels in brain, kidney, liver, lung, muscle and testis.

It is found in the cytoplasm. The protein resides in the midbody. It localises to the cytoskeleton. Its subcellular location is the microtubule organizing center. The protein localises to the centrosome. It is found in the spindle. The protein resides in the nucleus. Functionally, negatively regulates post-translational modifications of tubulin, including detyrosination of the C-terminus and polyglutamylation of glutamate residues. Also, indirectly promotes histone H4 trimethylation at 'Lys-20' (H4K20me3). Probably by controlling tubulin and/or histone H4 post-translational modifications, plays a role in mitosis and in maintaining chromosome number stability. During RNA virus-mediated infection, acts as a negative regulator of the RIG-I pathway by preventing MAVS binding to TBK1 and IKBKE. This Mus musculus (Mouse) protein is Tubulin--tyrosine ligase-like protein 12.